A 743-amino-acid chain; its full sequence is Type VI secretion system spike protein VgrG1 (743 aa).

It belongs to the VgrG protein family.

Its subcellular location is the secreted. The enzyme catalyses L-arginyl-[protein] + NAD(+) = N(omega)-(ADP-D-ribosyl)-L-arginyl-[protein] + nicotinamide + H(+). Part of the type VI secretion system specialized secretion system, which delivers several virulence factors in both prokaryotic and eukaryotic cells during infection. Acts directly as an secreted effector with an actin ADP-ribosyltransferase activity that disrupts the host actin cytoskeleton, leading to a decrease in host cell viability and an increase in apoptosis. This chain is Type VI secretion system spike protein VgrG1 (vgrG1), found in Aeromonas hydrophila subsp. hydrophila (strain ATCC 7966 / DSM 30187 / BCRC 13018 / CCUG 14551 / JCM 1027 / KCTC 2358 / NCIMB 9240 / NCTC 8049).